A 692-amino-acid chain; its full sequence is MGVQGLKTYIESSSRNDLKTWAFRDKQLIIDGCNLFYSLCFDSNLDQIHGGDYDTFEKVVRQFFENLSACDVHPYVVIDGGDDHTDKKWDTLLTRKQKKIKDAYDLSVGKRRQVLPLLTEKVFKQVLKKLKVPVVQTLEEADWEIAALAEEWNCPVLSNDSDFYIFNLRAGLLPITHFHWRKVRVNRKTNQKFILSKHFIARKFCKSFKMNVSLLPVFASILGNDYVKLPNIKNRHWERYSNPGSENPQIEGLLNWLSQFSGPDEAISALLRPTSNKTKAQEELSHGIQDYKLVPGSLAQIFRSTKVPQKISKGPLHVLPRWTLRPILDGKMSSYIINVLLHNRASLNAQVEDFQLPSANETSLHIRQVFYGLLLLGEQQTAGKRESVKGTTKRYVVEYSRQQIKRSSENVEAIQTKAMEGLRLETLYQEPHAVRLQVILDTLGVSCEMLKGTPDALQLQMFVTRYWLVNAEPQPCRVHLWGLLLGMVYGKLSSSPNAQKDMLSRLRVKASRKGGSVDIDVAHAYSQWQSCLKYSLNLNYLLSFPLTEPDCASLYRGSLVHQAVGELRRGISLEALLVKGSSAERIFKQLKDIIVSLMGDDFIKKMKSGLEHRDAGKTQRASKGQKDELDIYFEQMMIESIDSEDEELLDVRKSKAKNHLMELPVCPIRARHKAKARNARHPCKKYERRCFE.

The protein belongs to the asteroid family.

Functionally, structure-specific DNA endonuclease that specifically cleaves single-stranded DNA and 3' overhang DNA. The sequence is that of Single-strand DNA endonuclease ASTE1 (aste1a) from Danio rerio (Zebrafish).